Consider the following 356-residue polypeptide: Biotin synthase (356 aa).

The tract at residues 1–28 (MTIQANVPTGDETSDEASRQTSNEASSE) is disordered. A Radical SAM core domain is found at 77 to 302 (EDVEVEGIIS…RTVLRYAGGR (226 aa)). Residues C92, C96, and C99 each contribute to the [4Fe-4S] cluster site. 4 residues coordinate [2Fe-2S] cluster: C135, C168, C227, and R297.

It belongs to the radical SAM superfamily. Biotin synthase family. In terms of assembly, homodimer. [4Fe-4S] cluster is required as a cofactor. [2Fe-2S] cluster serves as cofactor.

It carries out the reaction (4R,5S)-dethiobiotin + (sulfur carrier)-SH + 2 reduced [2Fe-2S]-[ferredoxin] + 2 S-adenosyl-L-methionine = (sulfur carrier)-H + biotin + 2 5'-deoxyadenosine + 2 L-methionine + 2 oxidized [2Fe-2S]-[ferredoxin]. It participates in cofactor biosynthesis; biotin biosynthesis; biotin from 7,8-diaminononanoate: step 2/2. Functionally, catalyzes the conversion of dethiobiotin (DTB) to biotin by the insertion of a sulfur atom into dethiobiotin via a radical-based mechanism. In Arthrobacter sp. (strain FB24), this protein is Biotin synthase.